Consider the following 125-residue polypeptide: Photoactive yellow protein (125 aa).

Positions 23–86 (LDGLAFGAIQ…GKFKEGVASG (64 aa)) constitute a PAS domain. Residue C69 is modified to S-(4-hydroxycinnamyl)cysteine.

The protein belongs to the photoactive yellow protein family. In terms of assembly, monomer. Post-translationally, the 4-hydroxycinnamic acid (p-coumaric acid) chromophore is covalently bound via a thioester linkage.

In terms of biological role, photoactive blue light protein. Probably functions as a photoreceptor for a negative phototaxis response. In Halorhodospira halophila (Ectothiorhodospira halophila), this protein is Photoactive yellow protein (pyp).